The chain runs to 93 residues: Co-chaperonin GroES (93 aa).

Belongs to the GroES chaperonin family. Heptamer of 7 subunits arranged in a ring. Interacts with the chaperonin GroEL.

Its subcellular location is the cytoplasm. In terms of biological role, together with the chaperonin GroEL, plays an essential role in assisting protein folding. The GroEL-GroES system forms a nano-cage that allows encapsulation of the non-native substrate proteins and provides a physical environment optimized to promote and accelerate protein folding. GroES binds to the apical surface of the GroEL ring, thereby capping the opening of the GroEL channel. The polypeptide is Co-chaperonin GroES (Streptococcus intermedius).